The following is a 248-amino-acid chain: Flavodoxin/ferredoxin--NADP reductase (248 aa).

The FAD-binding FR-type domain maps to 2-101; sequence ADWVTGKVTK…SEAAGFFVLD (100 aa). Residues 50–53, Tyr66, 74–76, and Thr116 contribute to the FAD site; these read RAYS and KLS. Residues 143 to 144, 173 to 174, Arg184, 214 to 216, and Asp220 contribute to the NADP(+) site; these read AR, SR, and NPQ. Position 247 to 248 (247 to 248) interacts with FAD; it reads YW.

The protein belongs to the ferredoxin--NADP reductase type 1 family. Requires FAD as cofactor.

Its subcellular location is the cytoplasm. It catalyses the reaction 2 reduced [2Fe-2S]-[ferredoxin] + NADP(+) + H(+) = 2 oxidized [2Fe-2S]-[ferredoxin] + NADPH. The enzyme catalyses reduced [flavodoxin] + NADP(+) = oxidized [flavodoxin] + NADPH + 2 H(+). Its function is as follows. Transports electrons between flavodoxin or ferredoxin and NADPH. The protein is Flavodoxin/ferredoxin--NADP reductase (fpr) of Shigella flexneri.